A 254-amino-acid chain; its full sequence is Imidazole glycerol phosphate synthase subunit HisF (254 aa).

Catalysis depends on residues D11 and D130.

The protein belongs to the HisA/HisF family. In terms of assembly, heterodimer of HisH and HisF.

The protein resides in the cytoplasm. It carries out the reaction 5-[(5-phospho-1-deoxy-D-ribulos-1-ylimino)methylamino]-1-(5-phospho-beta-D-ribosyl)imidazole-4-carboxamide + L-glutamine = D-erythro-1-(imidazol-4-yl)glycerol 3-phosphate + 5-amino-1-(5-phospho-beta-D-ribosyl)imidazole-4-carboxamide + L-glutamate + H(+). The protein operates within amino-acid biosynthesis; L-histidine biosynthesis; L-histidine from 5-phospho-alpha-D-ribose 1-diphosphate: step 5/9. IGPS catalyzes the conversion of PRFAR and glutamine to IGP, AICAR and glutamate. The HisF subunit catalyzes the cyclization activity that produces IGP and AICAR from PRFAR using the ammonia provided by the HisH subunit. This Oceanobacillus iheyensis (strain DSM 14371 / CIP 107618 / JCM 11309 / KCTC 3954 / HTE831) protein is Imidazole glycerol phosphate synthase subunit HisF.